The primary structure comprises 341 residues: MAPTLQGQWIKVGQKGGTGPGPRSSHGIAAVGDKLYSFGGELTPNKHIDKDLYVFDFNTQTWSIAQPKGDAPTVSCLGVRMVAVGTKIYIFGGRDENRNFENFRSYDTVTSEWTFLTKLDEVGGPEARTFHSMASDENHVYVFGGVSKGGTMNTPTRFRTIEAYNIADGKWAQLPDPGDNFEKRGGAGFAVVQGKIWVVYGFATSIVPGGKDDYESNAVQFYDPASKKWTEVETTGAKPSARSVFAHAVVGKYIIIFAGEVWPDLNGHYGPGTLSNEGYALDTETLVWEKLGEEGAPAIPRGWTAYTAATVDGKNGLLMHGGKLPTNERTDDLYFYAVNSA.

The tract at residues 1-24 is disordered; sequence MAPTLQGQWIKVGQKGGTGPGPRS. Kelch repeat units follow at residues 34 to 82, 87 to 133, 139 to 194, and 203 to 249; these read KLYS…VRMV, KIYI…FHSM, HVYV…VVQG, and ATSI…AHAV. 8 residues coordinate a (Z)-N-(sulfonatooxy)alkanimidothioate: Lys46, Arg94, Thr129, Phe130, Arg157, Gly186, Lys211, and Val244. Arg94 functions as the Proton donor in the catalytic mechanism. Arg157 (proton donor) is an active-site residue. Residues Glu260, Asp264, and His268 each coordinate Fe(2+). A (Z)-N-(sulfonatooxy)alkanimidothioate is bound at residue Trp303.

In terms of assembly, homodimer. Interacts with WRKY53. Fe(2+) serves as cofactor. Expressed in epidermal cells of all above-ground organs except the anthers, in cambial cells of leaf and stem vascular bundles, and in glucosinolates rich S-cells found in stems just below the inflorescence. Absent from roots.

It localises to the cytoplasm. Its subcellular location is the nucleus. It carries out the reaction a (Z)-N-(sulfonatooxy)alkenimidothioate = an epithionitrile + sulfate. It catalyses the reaction a (Z)-N-(sulfonatooxy)alkanimidothioate = a nitrile + sulfur + sulfate. The enzyme catalyses (Z)-(indol-3-yl)-N-(sulfonatooxy)methanimidothioate = (indol-3-yl)acetonitrile + sulfur + sulfate. Its activity is regulated as follows. Not dependent on the presence of Fe(2+) although supplemental Fe(2+) increases nitriles formation. Functionally, specifier protein that contributes to constitutive and herbivore-induced simple nitrile formation. Converts glucosinolates both to epithionitriles and to simple nitriles in the presence of myrosinase. Promotes the formation of epithionitriles after hydrolysis of alkenylglucosinolates containing a terminal double bond. Mediates indol-3-ylacetonitrile (IACN) production from indol-3-ylmethylglucosinolate (glucobrassicin). Triggers the production of 3,4-epithiobutylnitrile from 2-propenylisothiocyanate, product of 2-propenylglucosinolate (sinigrin) catalysis by myrosinase. Seems inactive toward benzylglucosinolate (glucotropaeolin). Acts as a negative regulator of senescence. The polypeptide is N-(sulfonatooxy)alkenimidothioic acid sulfate-lyase (epithionitrile-forming) (Arabidopsis thaliana (Mouse-ear cress)).